The following is a 272-amino-acid chain: Shikimate dehydrogenase (NADP(+)) (272 aa).

Shikimate-binding positions include 14 to 16 (SLS) and Thr-61. The active-site Proton acceptor is Lys-65. Asp-102 is a binding site for shikimate. NADP(+) contacts are provided by residues 127 to 131 (GAGGA), 151 to 156 (NRTPSK), and Leu-215. Tyr-217 is a shikimate binding site. Residue Gly-239 participates in NADP(+) binding.

It belongs to the shikimate dehydrogenase family. Homodimer.

The catalysed reaction is shikimate + NADP(+) = 3-dehydroshikimate + NADPH + H(+). It functions in the pathway metabolic intermediate biosynthesis; chorismate biosynthesis; chorismate from D-erythrose 4-phosphate and phosphoenolpyruvate: step 4/7. Functionally, involved in the biosynthesis of the chorismate, which leads to the biosynthesis of aromatic amino acids. Catalyzes the reversible NADPH linked reduction of 3-dehydroshikimate (DHSA) to yield shikimate (SA). In Coxiella burnetii (strain CbuG_Q212) (Coxiella burnetii (strain Q212)), this protein is Shikimate dehydrogenase (NADP(+)).